Reading from the N-terminus, the 141-residue chain is Large ribosomal subunit protein uL16 (141 aa).

The span at 1–17 (MLQPKRTKYRKVQKGKM) shows a compositional bias: basic residues. The disordered stretch occupies residues 1 to 29 (MLQPKRTKYRKVQKGKMKGNSQRGHELSN).

This sequence belongs to the universal ribosomal protein uL16 family. Part of the 50S ribosomal subunit.

Its function is as follows. Binds 23S rRNA and is also seen to make contacts with the A and possibly P site tRNAs. The protein is Large ribosomal subunit protein uL16 of Flavobacterium psychrophilum (strain ATCC 49511 / DSM 21280 / CIP 103535 / JIP02/86).